The sequence spans 125 residues: Large ribosomal subunit protein bL12 (125 aa).

This sequence belongs to the bacterial ribosomal protein bL12 family. As to quaternary structure, homodimer. Part of the ribosomal stalk of the 50S ribosomal subunit. Forms a multimeric L10(L12)X complex, where L10 forms an elongated spine to which 2 to 4 L12 dimers bind in a sequential fashion. Binds GTP-bound translation factors.

In terms of biological role, forms part of the ribosomal stalk which helps the ribosome interact with GTP-bound translation factors. Is thus essential for accurate translation. The sequence is that of Large ribosomal subunit protein bL12 from Gluconacetobacter diazotrophicus (strain ATCC 49037 / DSM 5601 / CCUG 37298 / CIP 103539 / LMG 7603 / PAl5).